Consider the following 290-residue polypeptide: Glyceraldehyde-3-phosphate dehydrogenase (290 aa).

Positions 13 and 58 each coordinate NAD(+). D-glyceraldehyde 3-phosphate-binding positions include 129–131 (SCT), Thr160, 189–190 (TG), and Arg212. The active-site Nucleophile is Cys130.

Belongs to the glyceraldehyde-3-phosphate dehydrogenase family. Homotetramer.

The protein localises to the cytoplasm. It catalyses the reaction D-glyceraldehyde 3-phosphate + phosphate + NAD(+) = (2R)-3-phospho-glyceroyl phosphate + NADH + H(+). It functions in the pathway carbohydrate degradation; glycolysis; pyruvate from D-glyceraldehyde 3-phosphate: step 1/5. The chain is Glyceraldehyde-3-phosphate dehydrogenase (GPD) from Lactarius deterrimus (False saffron milkcap).